The sequence spans 511 residues: Phosphoenolpyruvate carboxylase (511 aa).

Belongs to the PEPCase type 2 family. In terms of assembly, homotetramer. Requires Mg(2+) as cofactor.

The catalysed reaction is oxaloacetate + phosphate = phosphoenolpyruvate + hydrogencarbonate. In terms of biological role, catalyzes the irreversible beta-carboxylation of phosphoenolpyruvate (PEP) to form oxaloacetate (OAA), a four-carbon dicarboxylic acid source for the tricarboxylic acid cycle. The sequence is that of Phosphoenolpyruvate carboxylase from Saccharolobus islandicus (strain M.16.27) (Sulfolobus islandicus).